The following is a 437-amino-acid chain: 3-phosphoshikimate 1-carboxyvinyltransferase (437 aa).

3-phosphoshikimate contacts are provided by Lys24, Ser25, and Arg29. Residue Lys24 participates in phosphoenolpyruvate binding. The phosphoenolpyruvate site is built by Gly95 and Arg123. 4 residues coordinate 3-phosphoshikimate: Ser168, Gln170, Asp317, and Lys344. Gln170 is a binding site for phosphoenolpyruvate. Asp317 functions as the Proton acceptor in the catalytic mechanism. Residues Arg348 and Arg390 each coordinate phosphoenolpyruvate.

This sequence belongs to the EPSP synthase family. In terms of assembly, monomer.

It localises to the cytoplasm. It carries out the reaction 3-phosphoshikimate + phosphoenolpyruvate = 5-O-(1-carboxyvinyl)-3-phosphoshikimate + phosphate. The protein operates within metabolic intermediate biosynthesis; chorismate biosynthesis; chorismate from D-erythrose 4-phosphate and phosphoenolpyruvate: step 6/7. In terms of biological role, catalyzes the transfer of the enolpyruvyl moiety of phosphoenolpyruvate (PEP) to the 5-hydroxyl of shikimate-3-phosphate (S3P) to produce enolpyruvyl shikimate-3-phosphate and inorganic phosphate. The protein is 3-phosphoshikimate 1-carboxyvinyltransferase of Wolinella succinogenes (strain ATCC 29543 / DSM 1740 / CCUG 13145 / JCM 31913 / LMG 7466 / NCTC 11488 / FDC 602W) (Vibrio succinogenes).